The chain runs to 557 residues: Formate--tetrahydrofolate ligase (557 aa).

65–72 contributes to the ATP binding site; it reads TPAGEGKT.

It belongs to the formate--tetrahydrofolate ligase family.

The catalysed reaction is (6S)-5,6,7,8-tetrahydrofolate + formate + ATP = (6R)-10-formyltetrahydrofolate + ADP + phosphate. It functions in the pathway one-carbon metabolism; tetrahydrofolate interconversion. The polypeptide is Formate--tetrahydrofolate ligase (Methylorubrum populi (strain ATCC BAA-705 / NCIMB 13946 / BJ001) (Methylobacterium populi)).